The sequence spans 129 residues: MVDKAAHILLVGVGGFLGSVARYLVALWMAPITAVFPFATLTVNLLGSFLIGFISELALSTSLISPSTRIFLVTGFCGGFTTFSSYMIEHSALLRDGEHLYAALYLFGSLIGGFIALYLGIISARWMAG.

A run of 4 helical transmembrane segments spans residues 8–28 (ILLVGVGGFLGSVARYLVALW), 34–54 (AVFPFATLTVNLLGSFLIGFI), 70–90 (IFLVTGFCGGFTTFSSYMIEH), and 102–122 (AALYLFGSLIGGFIALYLGII). Positions 78 and 81 each coordinate Na(+).

The protein belongs to the fluoride channel Fluc/FEX (TC 1.A.43) family.

It localises to the cell inner membrane. The catalysed reaction is fluoride(in) = fluoride(out). Its activity is regulated as follows. Na(+) is not transported, but it plays an essential structural role and its presence is essential for fluoride channel function. Its function is as follows. Fluoride-specific ion channel. Important for reducing fluoride concentration in the cell, thus reducing its toxicity. This chain is Fluoride-specific ion channel FluC, found in Chlorobium chlorochromatii (strain CaD3).